The primary structure comprises 271 residues: Interleukin-1 alpha (271 aa).

Positions 1–112 (MAKVPDMFED…DSEEEIIKPR (112 aa)) are excised as a propeptide. Lys82 carries the N6-acetyllysine modification. The segment at 82–86 (KKRRL) is nuclear localization signal (NLS). Phosphoserine is present on Ser87. Residues Asn102 and Asn141 are each glycosylated (N-linked (GlcNAc...) asparagine).

Belongs to the IL-1 family. As to quaternary structure, monomer. Interacts with TMED10; the interaction mediates the translocation from the cytoplasm into the ERGIC (endoplasmic reticulum-Golgi intermediate compartment) and thereby secretion. Interacts with IL1R1. Interacts with S100A13; this interaction is the first step in the export of IL1A, followed by direct translocation of this complex across the plasma membrane. Acetylated within its nuclear localization sequence, which impacts subcellular localization. In terms of processing, proteolytic processed by CAPN1 in a calcium-dependent manner. Cleavage from 31 kDa precursor to 18 kDa biologically active molecules. Post-translationally, phosphorylated. Phosphorylation greatly enhances susceptibility to digestion and promotes the conversion of pre-IL1A alpha to the biologically active IL1A.

It is found in the nucleus. The protein resides in the cytoplasm. Its subcellular location is the secreted. In terms of biological role, cytokine constitutively present intracellularly in nearly all resting non-hematopoietic cells that plays an important role in inflammation and bridges the innate and adaptive immune systems. After binding to its receptor IL1R1 together with its accessory protein IL1RAP, forms the high affinity interleukin-1 receptor complex. Signaling involves the recruitment of adapter molecules such as MYD88, IRAK1 or IRAK4. In turn, mediates the activation of NF-kappa-B and the three MAPK pathways p38, p42/p44 and JNK pathways. Within the cell, acts as an alarmin and cell death results in its liberation in the extracellular space after disruption of the cell membrane to induce inflammation and alert the host to injury or damage. In addition to its role as a danger signal, which occurs when the cytokine is passively released by cell necrosis, directly senses DNA damage and acts as signal for genotoxic stress without loss of cell integrity. The chain is Interleukin-1 alpha (IL1A) from Cercocebus atys (Sooty mangabey).